The chain runs to 701 residues: Polyribonucleotide nucleotidyltransferase (701 aa).

The Mg(2+) site is built by Asp487 and Asp493. Residues Pro554–Ile613 form the KH domain. Residues Gly623 to Lys691 enclose the S1 motif domain.

The protein belongs to the polyribonucleotide nucleotidyltransferase family. As to quaternary structure, component of the RNA degradosome, which is a multiprotein complex involved in RNA processing and mRNA degradation. Mg(2+) is required as a cofactor.

The protein localises to the cytoplasm. It carries out the reaction RNA(n+1) + phosphate = RNA(n) + a ribonucleoside 5'-diphosphate. Functionally, involved in mRNA degradation. Catalyzes the phosphorolysis of single-stranded polyribonucleotides processively in the 3'- to 5'-direction. This Pseudomonas entomophila (strain L48) protein is Polyribonucleotide nucleotidyltransferase.